Reading from the N-terminus, the 326-residue chain is ATP phosphoribosyltransferase regulatory subunit (326 aa).

The protein belongs to the class-II aminoacyl-tRNA synthetase family. HisZ subfamily. As to quaternary structure, heteromultimer composed of HisG and HisZ subunits.

It localises to the cytoplasm. Its pathway is amino-acid biosynthesis; L-histidine biosynthesis; L-histidine from 5-phospho-alpha-D-ribose 1-diphosphate: step 1/9. Its function is as follows. Required for the first step of histidine biosynthesis. May allow the feedback regulation of ATP phosphoribosyltransferase activity by histidine. The chain is ATP phosphoribosyltransferase regulatory subunit from Streptococcus thermophilus (strain ATCC BAA-491 / LMD-9).